A 107-amino-acid chain; its full sequence is UPF0060 membrane protein A1S_1909 (107 aa).

A run of 4 helical transmembrane segments spans residues 2 to 22 (FGLF…PYLI), 28 to 48 (SAWL…LLTL), 56 to 76 (IYAA…RFVD), and 85 to 105 (ILGG…PQGL).

It belongs to the UPF0060 family.

It is found in the cell inner membrane. The chain is UPF0060 membrane protein A1S_1909 from Acinetobacter baumannii (strain ATCC 17978 / DSM 105126 / CIP 53.77 / LMG 1025 / NCDC KC755 / 5377).